A 480-amino-acid polypeptide reads, in one-letter code: Probable cyclodipeptide synthase PUL1 (480 aa).

Its pathway is siderophore biosynthesis. Its function is as follows. Probable cyclodipeptide synthase; part of the PUL gene cluster that mediates the formation of pulcherrimin, a red iron-containing pigment composed of two cyclized and modified leucine molecules that acts as a siderophore, a chelator that binds iron outside the cell for subsequent uptake. Two leucine molecules are cyclized via a cyclodipeptide synthase, and the resulting diketopiperazine is oxidized by a cytochrome P450 monooxygenase to generate pulcherriminic acid (PA), which can then spontaneously bind iron to form pulcherrimin. The probable cyclodipeptide synthase PUL1 and the cytochrome P450 monooxygenase PUL2 encode the enzymes responsible for the two-step pulcherrimin biosynthesis pathway. The chain is Probable cyclodipeptide synthase PUL1 from Kluyveromyces lactis (strain ATCC 8585 / CBS 2359 / DSM 70799 / NBRC 1267 / NRRL Y-1140 / WM37) (Yeast).